Consider the following 200-residue polypeptide: Dephospho-CoA kinase (200 aa).

One can recognise a DPCK domain in the interval 4–200 (VLALTGGIAT…QLLIKIKEEG (197 aa)). 12 to 17 (ATGKST) serves as a coordination point for ATP.

It belongs to the CoaE family.

Its subcellular location is the cytoplasm. It catalyses the reaction 3'-dephospho-CoA + ATP = ADP + CoA + H(+). It functions in the pathway cofactor biosynthesis; coenzyme A biosynthesis; CoA from (R)-pantothenate: step 5/5. In terms of biological role, catalyzes the phosphorylation of the 3'-hydroxyl group of dephosphocoenzyme A to form coenzyme A. The polypeptide is Dephospho-CoA kinase (Lactobacillus acidophilus (strain ATCC 700396 / NCK56 / N2 / NCFM)).